A 576-amino-acid chain; its full sequence is Arginine--tRNA ligase (576 aa).

Positions 122-132 match the 'HIGH' region motif; that stretch reads PNVAKQMHVGH.

It belongs to the class-I aminoacyl-tRNA synthetase family. As to quaternary structure, monomer.

Its subcellular location is the cytoplasm. The catalysed reaction is tRNA(Arg) + L-arginine + ATP = L-arginyl-tRNA(Arg) + AMP + diphosphate. This Yersinia pseudotuberculosis serotype I (strain IP32953) protein is Arginine--tRNA ligase.